We begin with the raw amino-acid sequence, 338 residues long: Gibberellin 2-beta-dioxygenase 8 (338 aa).

Residues 191–290 enclose the Fe2OG dioxygenase domain; sequence NTCYLRMNRY…RFSTAYFMCP (100 aa). Fe cation-binding residues include His215, Asp217, and His271. Arg281 is a catalytic residue. Arg281 is a binding site for 2-oxoglutarate.

This sequence belongs to the iron/ascorbate-dependent oxidoreductase family. GA2OX subfamily. Requires Fe(2+) as cofactor.

It carries out the reaction gibberellin A1 + 2-oxoglutarate + O2 = gibberellin A8 + succinate + CO2. The protein operates within plant hormone biosynthesis; gibberellin biosynthesis. Functionally, catalyzes the 2-beta-hydroxylation of gibberellins (GA) precursors, rendering them unable to be converted to active GAs. Hydroxylates the C20-GA GA12 and GA53, but is not active on C19-GAs, like GA1, GA4, GA9 and GA20. The polypeptide is Gibberellin 2-beta-dioxygenase 8 (GA2OX8) (Arabidopsis thaliana (Mouse-ear cress)).